The sequence spans 485 residues: Glutamate--tRNA ligase (485 aa).

The 'HIGH' region signature appears at 11–21 (PSPTGHLHIGN). Residues 252-256 (KLSKR) carry the 'KMSKS' region motif. Lys255 serves as a coordination point for ATP.

It belongs to the class-I aminoacyl-tRNA synthetase family. Glutamate--tRNA ligase type 1 subfamily. Monomer.

The protein localises to the cytoplasm. It catalyses the reaction tRNA(Glu) + L-glutamate + ATP = L-glutamyl-tRNA(Glu) + AMP + diphosphate. Catalyzes the attachment of glutamate to tRNA(Glu) in a two-step reaction: glutamate is first activated by ATP to form Glu-AMP and then transferred to the acceptor end of tRNA(Glu). This Bacillus thuringiensis (strain Al Hakam) protein is Glutamate--tRNA ligase.